A 230-amino-acid chain; its full sequence is Prepilin leader peptidase/N-methyltransferase (230 aa).

The next 7 helical transmembrane spans lie at 1-21 (MIYF…WFYL), 60-80 (GHIL…QIAF), 84-104 (IFTV…YLDW), 114-134 (CLWL…LLTL), 140-160 (SAAS…FYYG), 181-201 (LETL…FSLI), and 208-228 (FLPF…VKYY).

The protein belongs to the peptidase A24 family.

The protein localises to the cell inner membrane. It catalyses the reaction Typically cleaves a -Gly-|-Phe- bond to release an N-terminal, basic peptide of 5-8 residues from type IV prepilin, and then N-methylates the new N-terminal amino group, the methyl donor being S-adenosyl-L-methionine.. Functionally, plays a role in type II pseudopili formation by proteolytically removing the leader sequence from substrate proteins and subsequently monomethylating the alpha-amino group of the newly exposed N-terminal phenylalanine. Substrates include proteins required for biogenesis of the type II general secretory apparatus. This chain is Prepilin leader peptidase/N-methyltransferase (hofD), found in Haemophilus influenzae (strain ATCC 51907 / DSM 11121 / KW20 / Rd).